We begin with the raw amino-acid sequence, 283 residues long: MGITGSLTPDQLDFFHSQGYLVIESFASEDEIRGLRKRMDELLNQFDCSVSSIFSTKNQKHTTDNYFFESAEKISFFFEEKAFGDDGKLKQPKQLSINKVGHALHELDPLYKDFTYSSKFSSLASSLGYRRPVVMQSMYIFKQPGIGGEVVPHQDNSFVYTDPQSCTGLWIALEDSTLVNGCLWAIPGSHKNGLVRRFIRGDNGITFDQPSPSYEQKDFVSIEMKAGSLIAIHGDLIHQSFENLSSKSRHAYSLHVVESDGCKWAKDNWIQRAKMPEPLYVLP.

2-oxoglutarate is bound by residues Lys99, Met138, 153–155 (HQD), and Trp170. The Fe cation site is built by His153 and Asp155. His238 provides a ligand contact to Fe cation. 2 residues coordinate 2-oxoglutarate: Ser240 and Arg249.

The protein belongs to the PhyH family. Fe cation is required as a cofactor. L-ascorbate serves as cofactor.

It catalyses the reaction phytanoyl-CoA + 2-oxoglutarate + O2 = 2-hydroxyphytanoyl-CoA + succinate + CO2. It participates in lipid metabolism; fatty acid metabolism. Functionally, converts phytanoyl-CoA to 2-hydroxyphytanoyl-CoA. The polypeptide is Phytanoyl-CoA dioxygenase (Arabidopsis thaliana (Mouse-ear cress)).